The following is a 1530-amino-acid chain: Regulating synaptic membrane exocytosis protein 2 (1530 aa).

The tract at residues 1 to 34 (MSAPLGPRGRPAPTPAASQPPPQPEMPDLSHLTE) is disordered. Residues 10–25 (RPAPTPAASQPPPQPE) show a composition bias toward pro residues. In terms of domain architecture, RabBD spans 26–194 (MPDLSHLTEE…TKSGAWFYNS (169 aa)). Residues 126–182 (KGDAPTCGICHKTKFADGCGHNCSYCQTKFCARCGGRVSLRSNKVMWVCNLCRKQQE) form an FYVE-type zinc finger. Zn(2+) contacts are provided by cysteine 132, cysteine 135, cysteine 148, cysteine 151, cysteine 156, cysteine 159, cysteine 174, and cysteine 177. Disordered regions lie at residues 195 to 608 (GSNT…ERQK) and 632 to 655 (SGVD…HPVT). Composition is skewed to basic and acidic residues over residues 210 to 225 (LRNE…KLHE), 327 to 338 (EPGHLNYRDSNR), 357 to 375 (RDEY…RYRS), 391 to 410 (EQMR…RHSD), and 419 to 443 (EDSR…RRAA). At serine 409 the chain carries Phosphoserine. Over residues 458–472 (AQGQSSYPQRTSNHS) the composition is skewed to polar residues. Positions 484-501 (DRPDMRRADSLRKQHHLD) are enriched in basic and acidic residues. Residues 519 to 530 (RNDSLSSDQSES) are compositionally biased toward polar residues. A compositionally biased stretch (basic residues) spans 537–546 (RPHKSKKGGK). Residues 567-577 (SCDDVELESES) are compositionally biased toward acidic residues. Composition is skewed to basic and acidic residues over residues 578 to 592 (VSEK…RKTS) and 643 to 653 (NEEHSHSDKHP). The PDZ domain occupies 677–763 (DGSVPRDSGA…EPQVELVVSR (87 aa)). Threonine 698 carries the post-translational modification Phosphothreonine. The disordered stretch occupies residues 771–802 (IPDSTHAQLESSSSSFESQKMDRPSISVTSPM). Phosphoserine is present on residues serine 800 and serine 803. The C2 1 domain maps to 814-937 (LSGQLSIKLW…ALLDDEPHWY (124 aa)). Disordered regions lie at residues 948–982 (PLPR…SEVS), 1003–1122 (LQSS…ERSA), 1130–1149 (RQMK…RLEQ), 1154–1187 (KYRS…SRTS), 1242–1263 (SLEK…TSGK), and 1282–1307 (KSRS…QRST). Positions 1003–1024 (LQSSTLSVPEQVMSSNHCSPSG) are enriched in polar residues. A compositionally biased stretch (basic and acidic residues) spans 1067–1086 (RMDRHRVMDDHYSSDRDRSH). The span at 1088–1101 (RTGSVQTSPSSTPG) shows a compositional bias: polar residues. The residue at position 1095 (serine 1095) is a Phosphoserine. A compositionally biased stretch (basic and acidic residues) spans 1154 to 1165 (KYRSGWDPHRGA). Serine 1175 carries the post-translational modification Phosphoserine. A compositionally biased stretch (low complexity) spans 1178-1187 (SDVSAVSRTS). The residue at position 1251 (serine 1251) is a Phosphoserine. The 119-residue stretch at 1376–1494 (AMGDIQVGMM…ELSNMVIGWF (119 aa)) folds into the C2 2 domain. A phosphoserine mark is found at serine 1515 and serine 1518.

In terms of assembly, interacts with TSPOAP1 and RIMBP2. Interacts with PPFIA3 and PPFIA4. Interacts via its zinc finger with the first C2 domain of UNC13A. Forms a complex consisting of UNC13A, RIMS2 and RAB3A. Heterodimer with PCLO. Part of a ternary complex involving PCLO and EPAC2. Interacts with RAB3A and RAB3B that have been activated by GTP-binding. Interacts with RAB3C, RAB3D and RAB26. Detected in testis, pituitary and an insulinoma cell line. Detected at low levels in cerebellar cortex.

The protein localises to the synapse. It is found in the synaptosome. In terms of biological role, rab effector involved in exocytosis. May act as scaffold protein. Plays a role in dendrite formation by melanocytes. This chain is Regulating synaptic membrane exocytosis protein 2 (Rims2), found in Mus musculus (Mouse).